Consider the following 453-residue polypeptide: Aryl hydrocarbon receptor nuclear translocator homolog (453 aa).

A bHLH domain is found at 44–97 (FARENHSEIERRRRNKMTHYINELAEMVPQCASLGRKPDKLTILRMAVSHMKGI). PAS domains are found at residues 115 to 193 (DQEL…LDLK) and 277 to 347 (ASMP…LSDQ). One can recognise a PAC domain in the interval 348-392 (PMRINIRVRTSTDYIPCTVSAYKFMNPYSEQFEYVVATHQIAPQE). The disordered stretch occupies residues 410–453 (EFGELGGAPSAVDYGQSSSGGWRPEAQGAPQAQWQWDPMNGYNQ).

In terms of assembly, interacts with hif-1. Heterodimer; efficient DNA binding requires dimerization with another bHLH protein. Forms a heterodimer with ahr-1; binds DNA as heterodimer. Forms a heterodimer with PAS domain-containing protein cky-1; binds DNA as heterodimer. In terms of tissue distribution, expressed in many cell types throughout development, including hypodermal cells, intestinal cells, pharyngeal cells, and neurons. Expressed in every cell during embryo.

It localises to the nucleus. Its function is as follows. Transcription factor. Efficient DNA binding requires dimerization with another bHLH protein, such as cky-1 or ahr-1. Regulates transcription of target genes, probably acting in complex with cky-1. Has a role in cellular differentiation. Required for pharyngeal development. In collaboration with ahr-1 it is involved in RMEL/R and SDQR neuron cell migration. Acts in the cellular response to hypoxia. Involved in aggregation behavior by regulating soluble guanylate cyclase gene expression in the URX neurons. The protein is Aryl hydrocarbon receptor nuclear translocator homolog of Caenorhabditis elegans.